A 234-amino-acid chain; its full sequence is Demethylmenaquinone methyltransferase (234 aa).

Residues T58, D79, and 106–107 each bind S-adenosyl-L-methionine; that span reads NA.

It belongs to the class I-like SAM-binding methyltransferase superfamily. MenG/UbiE family.

It carries out the reaction a 2-demethylmenaquinol + S-adenosyl-L-methionine = a menaquinol + S-adenosyl-L-homocysteine + H(+). Its pathway is quinol/quinone metabolism; menaquinone biosynthesis; menaquinol from 1,4-dihydroxy-2-naphthoate: step 2/2. Methyltransferase required for the conversion of demethylmenaquinol (DMKH2) to menaquinol (MKH2). This chain is Demethylmenaquinone methyltransferase, found in Geobacillus stearothermophilus (Bacillus stearothermophilus).